The primary structure comprises 323 residues: MDWQNRFSVLNLSSHDPLPELMLTHLTGWGAITLVGTDKKAYLQGQVTCNVVSLQEQQVTFGAHCDAKGKVWSVFRLFHHHDGYAMFQPQSAMEVELRELKKYAIFSKVTIAESSDIALGVMGSQADAWIDTVSETTGDVRRIAGGTAVRMSPQRWLLLVNAEQAEQYVNAWQGLHVEQSLWTRMDIEEAVPVVTQTAQNEHIPQALNVQAVDGISFTKGCYTGQETVARAKYRGINKRAMYIVKGNLSAPLSQDEPVVLERAVGENWRSAGALLTYYRFTDSIAIGLIVLPNDLEHDVELRLAAQPDTRWHIQPLPYSLSEE.

Residues tryptophan 29 and tryptophan 182 each contribute to the folate site.

This sequence belongs to the tRNA-modifying YgfZ family.

Its subcellular location is the cytoplasm. Folate-binding protein involved in regulating the level of ATP-DnaA and in the modification of some tRNAs. It is probably a key factor in regulatory networks that act via tRNA modification, such as initiation of chromosomal replication. The polypeptide is tRNA-modifying protein YgfZ (Vibrio cholerae serotype O1 (strain ATCC 39541 / Classical Ogawa 395 / O395)).